The following is a 201-amino-acid chain: Large ribosomal subunit protein uL4 (201 aa).

A disordered region spans residues 45-67 (AQKTRAEVTGSGKKPWRQKGTGR).

The protein belongs to the universal ribosomal protein uL4 family. Part of the 50S ribosomal subunit.

Functionally, one of the primary rRNA binding proteins, this protein initially binds near the 5'-end of the 23S rRNA. It is important during the early stages of 50S assembly. It makes multiple contacts with different domains of the 23S rRNA in the assembled 50S subunit and ribosome. Its function is as follows. Forms part of the polypeptide exit tunnel. In Yersinia enterocolitica serotype O:8 / biotype 1B (strain NCTC 13174 / 8081), this protein is Large ribosomal subunit protein uL4.